A 240-amino-acid chain; its full sequence is Uridylate kinase (240 aa).

K12 to G15 contacts ATP. The tract at residues G20 to G25 is involved in allosteric activation by GTP. Position 54 (G54) interacts with UMP. G55 and R59 together coordinate ATP. Residues D74 and T135–T142 each bind UMP. Positions 163, 169, and 172 each coordinate ATP.

Belongs to the UMP kinase family. As to quaternary structure, homohexamer.

Its subcellular location is the cytoplasm. The catalysed reaction is UMP + ATP = UDP + ADP. It functions in the pathway pyrimidine metabolism; CTP biosynthesis via de novo pathway; UDP from UMP (UMPK route): step 1/1. Its activity is regulated as follows. Allosterically activated by GTP. Inhibited by UTP. In terms of biological role, catalyzes the reversible phosphorylation of UMP to UDP. This chain is Uridylate kinase, found in Limosilactobacillus reuteri (Lactobacillus reuteri).